The chain runs to 346 residues: NADH-ubiquinone oxidoreductase chain 2 (346 aa).

11 helical membrane-spanning segments follow: residues methionine 1–isoleucine 21, histidine 25–serine 45, phenylalanine 60–alanine 80, cysteine 95–phenylalanine 115, leucine 124–methionine 144, leucine 149–glycine 169, isoleucine 178–valine 195, leucine 200–leucine 219, alanine 242–proline 262, glutamate 274–leucine 294, and alanine 326–valine 346.

The protein belongs to the complex I subunit 2 family.

Its subcellular location is the mitochondrion inner membrane. The enzyme catalyses a ubiquinone + NADH + 5 H(+)(in) = a ubiquinol + NAD(+) + 4 H(+)(out). In terms of biological role, core subunit of the mitochondrial membrane respiratory chain NADH dehydrogenase (Complex I) that is believed to belong to the minimal assembly required for catalysis. Complex I functions in the transfer of electrons from NADH to the respiratory chain. The immediate electron acceptor for the enzyme is believed to be ubiquinone. The protein is NADH-ubiquinone oxidoreductase chain 2 (MT-ND2) of Mareca americana (American wigeon).